We begin with the raw amino-acid sequence, 513 residues long: ATP synthase subunit alpha (513 aa).

G169–T176 lines the ATP pocket.

It belongs to the ATPase alpha/beta chains family. F-type ATPases have 2 components, CF(1) - the catalytic core - and CF(0) - the membrane proton channel. CF(1) has five subunits: alpha(3), beta(3), gamma(1), delta(1), epsilon(1). CF(0) has three main subunits: a(1), b(2) and c(9-12). The alpha and beta chains form an alternating ring which encloses part of the gamma chain. CF(1) is attached to CF(0) by a central stalk formed by the gamma and epsilon chains, while a peripheral stalk is formed by the delta and b chains.

The protein resides in the cell inner membrane. It carries out the reaction ATP + H2O + 4 H(+)(in) = ADP + phosphate + 5 H(+)(out). Its function is as follows. Produces ATP from ADP in the presence of a proton gradient across the membrane. The alpha chain is a regulatory subunit. This chain is ATP synthase subunit alpha, found in Shewanella sp. (strain MR-4).